Here is a 240-residue protein sequence, read N- to C-terminus: Uridylate kinase (240 aa).

Residues 15 to 18, Gly-58, and Arg-62 each bind ATP; that span reads KISG. UMP contacts are provided by residues Asp-77 and 138 to 145; that span reads TGNPLFTT. The ATP site is built by Thr-165, Tyr-171, and Asp-174.

The protein belongs to the UMP kinase family. In terms of assembly, homohexamer.

It is found in the cytoplasm. It catalyses the reaction UMP + ATP = UDP + ADP. It participates in pyrimidine metabolism; CTP biosynthesis via de novo pathway; UDP from UMP (UMPK route): step 1/1. With respect to regulation, inhibited by UTP. Its function is as follows. Catalyzes the reversible phosphorylation of UMP to UDP. The sequence is that of Uridylate kinase from Buchnera aphidicola subsp. Schizaphis graminum (strain Sg).